We begin with the raw amino-acid sequence, 282 residues long: Bifunctional protein FolD (282 aa).

NADP(+)-binding positions include 164–166 (GAS), Ile189, and Ile230.

It belongs to the tetrahydrofolate dehydrogenase/cyclohydrolase family. In terms of assembly, homodimer.

It catalyses the reaction (6R)-5,10-methylene-5,6,7,8-tetrahydrofolate + NADP(+) = (6R)-5,10-methenyltetrahydrofolate + NADPH. The enzyme catalyses (6R)-5,10-methenyltetrahydrofolate + H2O = (6R)-10-formyltetrahydrofolate + H(+). Its pathway is one-carbon metabolism; tetrahydrofolate interconversion. Its function is as follows. Catalyzes the oxidation of 5,10-methylenetetrahydrofolate to 5,10-methenyltetrahydrofolate and then the hydrolysis of 5,10-methenyltetrahydrofolate to 10-formyltetrahydrofolate. The chain is Bifunctional protein FolD from Nitratiruptor sp. (strain SB155-2).